The following is a 391-amino-acid chain: E1B 55 kDa protein (391 aa).

Residue serine 387 is modified to Phosphoserine.

It belongs to the adenoviridae E1B 55 kDa protein family. In terms of assembly, interacts with host PML-4 and PML-5; this interaction promotes efficient subnuclear targeting of E1B-55K to PML nuclear bodies. Interacts with E4-ORF3 protein. Interacts with E4-ORF6 protein.

It localises to the host nucleus. Its subcellular location is the host cytoplasm. Plays a major role to prevent cellular inhibition of viral genome replication. Assembles an SCF-like E3 ubiquitin ligase complex based on the cellular proteins ELOB, ELOC, CUL5 and RBX1, in cooperation with viral E4orf6. This viral RING-type ligase ubiquitinates cellular substrates and targets them to proteasomal degradation: TP53/p53, LIG4, MRE11-RAD50-NBS1 (MRN) complex, ITGA3, DAXX and BLM. E1B-55K probably acts as the substrate-specific adapter of the SCF-like E3 ubiquitin ligase complex. Degradation of host TP53/p53 activity is essential for preventing E1A-induced TP53 accumulation that would otherwise lead to cell apoptosis and growth arrest. E1B-55K also inactivates TP53 transcription-factor activity by binding its transactivation domain. E1B-55K also functions as a SUMO1 E3 ligase for TP53 which causes the latter to be sequestered in promyelocytic leukemia (PML) nuclear bodies thereby contributing to maximal inhibition of TP53 function. The polypeptide is E1B 55 kDa protein (Tree shrew adenovirus serotype 1 (TSAdV-1)).